The following is a 23-amino-acid chain: Dermaseptin III-like peptide (23 aa).

Expressed by the skin glands.

It localises to the secreted. Functionally, possesses a potent antimicrobial activity against bacteria, fungi and protozoa. Probably acts by disturbing membrane functions with its amphipathic structure. This is Dermaseptin III-like peptide from Phyllomedusa burmeisteri (Brazilian common walking leaf frog).